The primary structure comprises 284 residues: NAD(P)H-hydrate epimerase (284 aa).

The transit peptide at 1 to 55 directs the protein to the mitochondrion; it reads MSGLRTLLGLGLLVSSSRFPRVVARGGPRCPGPAWWAARPMHLGDSTMAGGTVKY. The YjeF N-terminal domain maps to 61–271; that stretch reads AQAVDEELFN…DLEKKYQLNL (211 aa). 115–119 is a binding site for (6S)-NADPHX; it reads NNGGD. Asn-116 serves as a coordination point for K(+). At Lys-140 the chain carries N6-succinyllysine. Residue Asp-181 coordinates K(+). Residues 185–191 and Asp-214 each bind (6S)-NADPHX; that span reads GFSFKGA. Ser-217 is a K(+) binding site.

This sequence belongs to the NnrE/AIBP family. Homodimer. Interacts with APOA1 and APOA2. The cofactor is K(+). In terms of processing, undergoes physiological phosphorylation during sperm capacitation, downstream to PKA activation.

Its subcellular location is the mitochondrion. The protein localises to the secreted. It carries out the reaction (6R)-NADHX = (6S)-NADHX. The enzyme catalyses (6R)-NADPHX = (6S)-NADPHX. Its function is as follows. Catalyzes the epimerization of the S- and R-forms of NAD(P)HX, a damaged form of NAD(P)H that is a result of enzymatic or heat-dependent hydration. This is a prerequisite for the S-specific NAD(P)H-hydrate dehydratase to allow the repair of both epimers of NAD(P)HX. Accelerates cholesterol efflux from endothelial cells to high-density lipoprotein (HDL) and thereby regulates angiogenesis. This Monodelphis domestica (Gray short-tailed opossum) protein is NAD(P)H-hydrate epimerase.